We begin with the raw amino-acid sequence, 275 residues long: Light-independent protochlorophyllide reductase iron-sulfur ATP-binding protein (275 aa).

ATP is bound by residues 12–17 (GIGKST) and Lys41. Residue Ser16 coordinates Mg(2+). [4Fe-4S] cluster-binding residues include Cys97 and Cys131. Position 182 to 183 (182 to 183 (NR)) interacts with ATP.

The protein belongs to the NifH/BchL/ChlL family. Homodimer. Protochlorophyllide reductase is composed of three subunits; BchL, BchN and BchB. Requires [4Fe-4S] cluster as cofactor.

The catalysed reaction is chlorophyllide a + oxidized 2[4Fe-4S]-[ferredoxin] + 2 ADP + 2 phosphate = protochlorophyllide a + reduced 2[4Fe-4S]-[ferredoxin] + 2 ATP + 2 H2O. It participates in porphyrin-containing compound metabolism; bacteriochlorophyll biosynthesis (light-independent). Functionally, component of the dark-operative protochlorophyllide reductase (DPOR) that uses Mg-ATP and reduced ferredoxin to reduce ring D of protochlorophyllide (Pchlide) to form chlorophyllide a (Chlide). This reaction is light-independent. The L component serves as a unique electron donor to the NB-component of the complex, and binds Mg-ATP. The protein is Light-independent protochlorophyllide reductase iron-sulfur ATP-binding protein of Chlorobium phaeobacteroides (strain DSM 266 / SMG 266 / 2430).